The following is a 241-amino-acid chain: MASTLKPETLVKKSKAQQKTAEERAAAKVVRQASNQEKRKIIFDRAAAYQKEYTDAERAVIKAKRDAKAAGSYYVDAQPKLVFVVRIKGINKIAPKPRKVLQLLRLTQINAGVFVRLTKATSELLKLAEPYIAYGYPNLSTIRHLVYKRGHGKINKQRIALSDNAIIEANLGKYGILSIEDLIHEIYTVGPNFKQANNFLWPFKLSNPNGGFRTRKFFHFIQGGDTGNREEFINALVKQMN.

The tract at residues 1–25 is disordered; that stretch reads MASTLKPETLVKKSKAQQKTAEERA.

This sequence belongs to the universal ribosomal protein uL30 family.

This is Large ribosomal subunit protein uL30 (RPL7) from Debaryomyces hansenii (strain ATCC 36239 / CBS 767 / BCRC 21394 / JCM 1990 / NBRC 0083 / IGC 2968) (Yeast).